The following is a 571-amino-acid chain: Phosphatidylinositol-3,5-bisphosphate 3-phosphatase MTMR2 (571 aa).

The GRAM domain maps to 1-67 (MEEPPLLPGE…GVINRVEKIG (67 aa)). Residues 133–508 (GWKVYDPIWE…RHLELWVGYY (376 aa)) enclose the Myotubularin phosphatase domain. Positions 258, 283, and 284 each coordinate a 1,2-diacyl-sn-glycero-3-phospho-(1D-myo-inositol-3,5-bisphosphate). The a 1,2-diacyl-sn-glycero-3-phospho-(1D-myo-inositol-3-phosphate) site is built by Asn258, Asn283, and Ile284. Cys345 acts as the Phosphocysteine intermediate in catalysis. The a 1,2-diacyl-sn-glycero-3-phospho-(1D-myo-inositol-3,5-bisphosphate) site is built by Ser346, Asp347, Gly348, Trp349, Asp350, Arg351, Arg387, and Arg391. A 1,2-diacyl-sn-glycero-3-phospho-(1D-myo-inositol-3-phosphate) contacts are provided by Ser346, Asp347, Gly348, Trp349, Asp350, and Arg351. An a 1,2-diacyl-sn-glycero-3-phospho-(1D-myo-inositol-3-phosphate)-binding site is contributed by Arg391. Positions 521–553 (VHNRYKELLAKRAELQKKVEELQREITNRSTSS) form a coiled coil. The interval 544-571 (REITNRSTSSSERAGSPAQCVTPVQTVV) is disordered.

The protein belongs to the protein-tyrosine phosphatase family. Non-receptor class myotubularin subfamily. Homooligomer and heterooligomer.

Its subcellular location is the cytoplasm. The protein localises to the early endosome membrane. The catalysed reaction is a 1,2-diacyl-sn-glycero-3-phospho-(1D-myo-inositol-3,5-bisphosphate) + H2O = a 1,2-diacyl-sn-glycero-3-phospho-(1D-myo-inositol-5-phosphate) + phosphate. It carries out the reaction a 1,2-diacyl-sn-glycero-3-phospho-(1D-myo-inositol-3-phosphate) + H2O = a 1,2-diacyl-sn-glycero-3-phospho-(1D-myo-inositol) + phosphate. The enzyme catalyses 1,2-dioctanoyl-sn-glycero-3-phospho-(1-D-myo-inositol-3-phosphate) + H2O = 1,2-dioctanoyl-sn-glycero-3-phospho-(1D-myo-inositol) + phosphate. It catalyses the reaction 1,2-dioctanoyl-sn-glycero-3-phospho-(1D-myo-inositol-3,5-bisphosphate) + H2O = 1,2-dioctanoyl-sn-glycero-3-phospho-(1D-myo-inositol-5-phosphate) + phosphate. Lipid phosphatase that specifically dephosphorylates the D-3 position of phosphatidylinositol 3-phosphate and phosphatidylinositol 3,5-bisphosphate, generating phosphatidylinositol and phosphatidylinositol 5-phosphate. Regulates the level of these phosphoinositides critical for various biological processes including autophagy initiation and autophagosome maturation. In Gallus gallus (Chicken), this protein is Phosphatidylinositol-3,5-bisphosphate 3-phosphatase MTMR2.